The primary structure comprises 144 residues: Actin-associated protein FAM107A (144 aa).

A coiled-coil region spans residues 70-90 (VLEHRRRNQLIKKKEEELEAK). Positions 74 to 84 (RRRNQLIKKKE) match the Nuclear localization signal motif. Residues 104-123 (QQRLNQLENPPQRDEDHAPE) form a disordered region. The segment covering 114–123 (PQRDEDHAPE) has biased composition (basic and acidic residues).

As to quaternary structure, interacts with ACTB. Interacts with F-actin. Interacts with PRDX1. Interacts with COMMD1; this interaction stabilizes COMMD1 in the nucleus. Interacts with MAP1A. In terms of tissue distribution, expressed in septum, the neocortex, the CA3 region of the hippocampus and the cerebellum (at protein level).

Its subcellular location is the nucleus. It is found in the cytoplasm. It localises to the cytoskeleton. The protein localises to the stress fiber. The protein resides in the cell junction. Its subcellular location is the focal adhesion. It is found in the cell projection. It localises to the ruffle membrane. The protein localises to the synapse. Stress-inducible actin-binding protein that plays a role in synaptic and cognitive functions by modulating actin filamentous (F-actin) dynamics. Mediates polymerization of globular actin to F-actin. Also binds to, stabilizes and bundles F-actin. Involved in synaptic function by regulating neurite outgrowth in an actin-dependent manner and for the acquisition of hippocampus-dependent cognitive function, such as learning and long-term memory. Plays a role in the actin and microtubule cytoskeleton organization; negatively regulates focal adhesion (FA) assembly promoting malignant glial cell migration in an actin-, microtubule- and MAP1A-dependent manner. Also involved in neuroblastoma G1/S phase cell cycle progression and cell proliferation inhibition by stimulating ubiquitination of NF-kappa-B subunit RELA and NF-kappa-B degradation in a COMMD1- and actin-dependent manner. May play a role in tumor development. This Mus musculus (Mouse) protein is Actin-associated protein FAM107A.